Consider the following 784-residue polypeptide: MADWDEIKRLAADFQKAQLSTGLQRLSERNCIEIVRLLIEKGLIDVIYTNDGKEYLTQDHLKQEVKDELYVRGGRVNLIELARVLNVDFGKIEYTAKRLVEKDPNLHLLLGQLIETSYLQRLASEINQKLVQYGEIHIGQLTTTYDLPTDFILNKIVLANLHKVIFAKQDPTNAHIFFTQSYIARNKAKIRGALAAITKPTPISVILNLTDVPARILYMSLNEMSSLGSVTVQSPAGQYIPHVYQRMQAQWVKDYFKQNGHIMYETVTKLGVSDVRSFVQAQLPDEKLVQLKNCIIGNRLIDQVKDSMDMCVTSNSYLDISTILPSSLSDDNIEEILTHILTPTIRKQTYVFGMVVLTVNFMDECVKGCLELVNEHAKRAVESGSYQKYIAEKSIKHQEVDHGVMEEEKADKREERRKKASTGKGGGGAQGRETKTKSTKKHARGTRGNVSDSDDGGEIQTNASNKKGGKDPHIELITAKEIAKVVEKTLEPEGLEMLAKDVANHYFPILSKQALVKAHELYEQSLQKNNQNRRQTHASIQEKLNTLYNDIRLYEKGLKLFPADVQGQLLKYLLKTFGTDACNELCLYVASECNLNTNFNAPLTTEQRTKIANDSGPEYRPHLQTLCKALSASETVEDFLDKTEKTMQACSMMLKKIDKKKDRNLILCHKHGLLEQLTNCTDPALVLHLAVLIIFTISTQTMLHASGRHVSAILTFLQTVLSTDDSKVFNNYHDLVLKLLSTESSTTEEAKANAEDITKQLGELTPVVKNIAGNFKKAGVTPVE.

A compositionally biased stretch (basic and acidic residues) spans 398–414 (QEVDHGVMEEEKADKRE). The interval 398 to 472 (QEVDHGVMEE…ASNKKGGKDP (75 aa)) is disordered.

It belongs to the UFL1 family.

Its function is as follows. E3 UFM1-protein ligase that mediates ufmylation of target proteins. The sequence is that of E3 UFM1-protein ligase 1 homolog from Anopheles gambiae (African malaria mosquito).